The chain runs to 84 residues: Putative membrane protein insertion efficiency factor (84 aa).

The tract at residues 60–84 (WSQPGEDPVPDHFSLKRNDTRKQSH) is disordered. The segment covering 68 to 84 (VPDHFSLKRNDTRKQSH) has biased composition (basic and acidic residues).

This sequence belongs to the UPF0161 family.

The protein resides in the cell membrane. Functionally, could be involved in insertion of integral membrane proteins into the membrane. In Streptococcus gordonii (strain Challis / ATCC 35105 / BCRC 15272 / CH1 / DL1 / V288), this protein is Putative membrane protein insertion efficiency factor.